Consider the following 591-residue polypeptide: 2-succinyl-5-enolpyruvyl-6-hydroxy-3-cyclohexene-1-carboxylate synthase (591 aa).

The protein belongs to the TPP enzyme family. MenD subfamily. As to quaternary structure, homodimer. The cofactor is Mg(2+). Mn(2+) is required as a cofactor. Thiamine diphosphate serves as cofactor.

The enzyme catalyses isochorismate + 2-oxoglutarate + H(+) = 5-enolpyruvoyl-6-hydroxy-2-succinyl-cyclohex-3-ene-1-carboxylate + CO2. The protein operates within quinol/quinone metabolism; 1,4-dihydroxy-2-naphthoate biosynthesis; 1,4-dihydroxy-2-naphthoate from chorismate: step 2/7. Its pathway is quinol/quinone metabolism; menaquinone biosynthesis. Its function is as follows. Catalyzes the thiamine diphosphate-dependent decarboxylation of 2-oxoglutarate and the subsequent addition of the resulting succinic semialdehyde-thiamine pyrophosphate anion to isochorismate to yield 2-succinyl-5-enolpyruvyl-6-hydroxy-3-cyclohexene-1-carboxylate (SEPHCHC). This is 2-succinyl-5-enolpyruvyl-6-hydroxy-3-cyclohexene-1-carboxylate synthase from Salinibacter ruber (strain DSM 13855 / M31).